The following is a 226-amino-acid chain: Orotidine 5'-phosphate decarboxylase (226 aa).

Substrate contacts are provided by residues Asp8, Lys30, 58 to 67 (DLKIHDIPNT), Thr117, Arg177, Gln186, Gly206, and Arg207. Residue Lys60 is the Proton donor of the active site.

It belongs to the OMP decarboxylase family. Type 1 subfamily. In terms of assembly, homodimer.

The enzyme catalyses orotidine 5'-phosphate + H(+) = UMP + CO2. It functions in the pathway pyrimidine metabolism; UMP biosynthesis via de novo pathway; UMP from orotate: step 2/2. In terms of biological role, catalyzes the decarboxylation of orotidine 5'-monophosphate (OMP) to uridine 5'-monophosphate (UMP). The polypeptide is Orotidine 5'-phosphate decarboxylase (Campylobacter jejuni subsp. jejuni serotype O:6 (strain 81116 / NCTC 11828)).